We begin with the raw amino-acid sequence, 1082 residues long: AP-3 complex subunit beta-2 (1082 aa).

Positions 1–30 are disordered; sequence MSAAPAYSEDKGGSAGPGEPEYGHDPASGG. A phosphoserine mark is found at Ser-272 and Ser-282. Residues 666 to 677 show a composition bias toward basic and acidic residues; sequence NREKRKEKEKPF. The segment at 666-801 is disordered; that stretch reads NREKRKEKEK…KTPPGSKSAP (136 aa). Positions 691–700 are enriched in acidic residues; the sequence is ADSEPESESE. Low complexity predominate over residues 704–715; sequence KSSSGSGSGESS. Composition is skewed to acidic residues over residues 716–726 and 775–784; these read SESDNEEEDEE and VTSESEEEQV.

Belongs to the adaptor complexes large subunit family. As to quaternary structure, adaptor protein complex 3 (AP-3) is a heterotetramer composed of two large adaptins (delta-type subunit AP3D1 and beta-type subunit AP3B1 or AP3B2), a medium adaptin (mu-type subunit AP3M1 or AP3M2) and a small adaptin (sigma-type subunit APS1 or AP3S2). AP-3 associates with the BLOC-1 complex.

The protein resides in the cytoplasmic vesicle. The protein localises to the clathrin-coated vesicle membrane. Its subcellular location is the golgi apparatus. Subunit of non-clathrin- and clathrin-associated adaptor protein complex 3 (AP-3) that plays a role in protein sorting in the late-Golgi/trans-Golgi network (TGN) and/or endosomes. The AP complexes mediate both the recruitment of clathrin to membranes and the recognition of sorting signals within the cytosolic tails of transmembrane cargo molecules. AP-3 appears to be involved in the sorting of a subset of transmembrane proteins targeted to lysosomes and lysosome-related organelles. In concert with the BLOC-1 complex, AP-3 is required to target cargos into vesicles assembled at cell bodies for delivery into neurites and nerve terminals. The polypeptide is AP-3 complex subunit beta-2 (Ap3b2) (Mus musculus (Mouse)).